The sequence spans 198 residues: Remorin (198 aa).

Positions 1-11 (MAELEAKKVEI) are enriched in basic and acidic residues. The tract at residues 1–24 (MAELEAKKVEIVDPAPPAPGPVEA) is disordered. Residues 97 to 184 (EESEKSKAEN…LKAEELAAKY (88 aa)) are a coiled coil.

Belongs to the remorin family. The N-terminus is blocked. Post-translationally, phosphorylated.

The protein localises to the cell membrane. Functionally, binds to both simple and complex galacturonides. May be involved in cell-to-cell signaling and molecular transport. This is Remorin from Solanum tuberosum (Potato).